The following is a 294-amino-acid chain: Undecaprenyl-diphosphatase (294 aa).

The next 6 membrane-spanning stretches (helical) occupy residues 39-59, 93-113, 123-143, 197-217, 234-254, and 265-285; these read PGAA…ILYF, TQMG…GLLF, NLWI…VVDA, VSFL…AVSA, ATIA…IGFL, and FAIY…CGVL.

It belongs to the UppP family.

It localises to the cell membrane. It carries out the reaction di-trans,octa-cis-undecaprenyl diphosphate + H2O = di-trans,octa-cis-undecaprenyl phosphate + phosphate + H(+). Functionally, catalyzes the dephosphorylation of undecaprenyl diphosphate (UPP). Confers resistance to bacitracin. The protein is Undecaprenyl-diphosphatase of Bifidobacterium adolescentis (strain ATCC 15703 / DSM 20083 / NCTC 11814 / E194a).